Consider the following 200-residue polypeptide: MARYTGPSWKLSRRLGISLSGTGKELEKRPYAPGPHGPGQRKKLSEYGLQLQEKQKLRHMYGVNERQFRTLFDKAAKMTGKHGENFMILLDARLDNVVYKLGLARTRRQARQLVNHGHILVDGSRVDIPSYQVKPGQTIGVREKSRNLSIIKESVEVNNFVPEYLTFDAEKLEGTFTRLPERSELAPEINEALIVEFYSR.

The disordered stretch occupies residues 22-42 (TGKELEKRPYAPGPHGPGQRK). Residues 92–155 (ARLDNVVYKL…RNLSIIKESV (64 aa)) enclose the S4 RNA-binding domain.

The protein belongs to the universal ribosomal protein uS4 family. Part of the 30S ribosomal subunit. Contacts protein S5. The interaction surface between S4 and S5 is involved in control of translational fidelity.

In terms of biological role, one of the primary rRNA binding proteins, it binds directly to 16S rRNA where it nucleates assembly of the body of the 30S subunit. Its function is as follows. With S5 and S12 plays an important role in translational accuracy. This is Small ribosomal subunit protein uS4 from Bacillus velezensis (strain DSM 23117 / BGSC 10A6 / LMG 26770 / FZB42) (Bacillus amyloliquefaciens subsp. plantarum).